A 398-amino-acid polypeptide reads, in one-letter code: Phosphoglycerate kinase (398 aa).

Residues 21-23, Arg-36, 59-62, Arg-119, and Arg-157 contribute to the substrate site; these read DFN and HLGR. ATP contacts are provided by residues Lys-208, Gly-296, Glu-327, and 354-357; that span reads GGDS.

Belongs to the phosphoglycerate kinase family. Monomer.

It localises to the cytoplasm. The catalysed reaction is (2R)-3-phosphoglycerate + ATP = (2R)-3-phospho-glyceroyl phosphate + ADP. It functions in the pathway carbohydrate degradation; glycolysis; pyruvate from D-glyceraldehyde 3-phosphate: step 2/5. This Lactococcus lactis subsp. lactis (strain IL1403) (Streptococcus lactis) protein is Phosphoglycerate kinase (pgk).